The sequence spans 357 residues: Thiamine thiazole synthase, chloroplastic (357 aa).

Residues Ala102, 123–124 (EQ), Gly131, and Val196 contribute to the substrate site. The residue at position 233 (Cys233) is a 2,3-didehydroalanine (Cys). Substrate is bound by residues Asp235, His250, Met304, and 314–316 (RMG).

The protein belongs to the THI4 family. Homooctamer. The cofactor is Fe cation. Post-translationally, during the catalytic reaction, a sulfide is transferred from Cys-233 to a reaction intermediate, generating a dehydroalanine residue.

It is found in the plastid. The protein localises to the chloroplast. It catalyses the reaction [ADP-thiazole synthase]-L-cysteine + glycine + NAD(+) = [ADP-thiazole synthase]-dehydroalanine + ADP-5-ethyl-4-methylthiazole-2-carboxylate + nicotinamide + 3 H2O + 2 H(+). Involved in biosynthesis of the thiamine precursor thiazole. Catalyzes the conversion of NAD and glycine to adenosine diphosphate 5-(2-hydroxyethyl)-4-methylthiazole-2-carboxylic acid (ADT), an adenylated thiazole intermediate. The reaction includes an iron-dependent sulfide transfer from a conserved cysteine residue of the protein to a thiazole intermediate. The enzyme can only undergo a single turnover, which suggests it is a suicide enzyme. May have additional roles in adaptation to various stress conditions and in DNA damage tolerance. This chain is Thiamine thiazole synthase, chloroplastic, found in Chlamydomonas reinhardtii (Chlamydomonas smithii).